Here is a 294-residue protein sequence, read N- to C-terminus: Phosphatidylserine decarboxylase proenzyme (294 aa).

Active-site charge relay system; for autoendoproteolytic cleavage activity residues include Asp-100, His-157, and Ser-261. Ser-261 acts as the Schiff-base intermediate with substrate; via pyruvic acid; for decarboxylase activity in catalysis. Pyruvic acid (Ser); by autocatalysis is present on Ser-261.

This sequence belongs to the phosphatidylserine decarboxylase family. PSD-B subfamily. Prokaryotic type I sub-subfamily. Heterodimer of a large membrane-associated beta subunit and a small pyruvoyl-containing alpha subunit. The cofactor is pyruvate. Is synthesized initially as an inactive proenzyme. Formation of the active enzyme involves a self-maturation process in which the active site pyruvoyl group is generated from an internal serine residue via an autocatalytic post-translational modification. Two non-identical subunits are generated from the proenzyme in this reaction, and the pyruvate is formed at the N-terminus of the alpha chain, which is derived from the carboxyl end of the proenzyme. The autoendoproteolytic cleavage occurs by a canonical serine protease mechanism, in which the side chain hydroxyl group of the serine supplies its oxygen atom to form the C-terminus of the beta chain, while the remainder of the serine residue undergoes an oxidative deamination to produce ammonia and the pyruvoyl prosthetic group on the alpha chain. During this reaction, the Ser that is part of the protease active site of the proenzyme becomes the pyruvoyl prosthetic group, which constitutes an essential element of the active site of the mature decarboxylase.

The protein resides in the cell membrane. It catalyses the reaction a 1,2-diacyl-sn-glycero-3-phospho-L-serine + H(+) = a 1,2-diacyl-sn-glycero-3-phosphoethanolamine + CO2. Its pathway is phospholipid metabolism; phosphatidylethanolamine biosynthesis; phosphatidylethanolamine from CDP-diacylglycerol: step 2/2. In terms of biological role, catalyzes the formation of phosphatidylethanolamine (PtdEtn) from phosphatidylserine (PtdSer). The chain is Phosphatidylserine decarboxylase proenzyme from Histophilus somni (strain 129Pt) (Haemophilus somnus).